Here is a 428-residue protein sequence, read N- to C-terminus: GTPase Obg (428 aa).

The 158-residue stretch at 1-158 (MFVDQVKVYV…RYIVLELKVL (158 aa)) folds into the Obg domain. The interval 117 to 143 (AKGGRGGRGNTRFATPANPAPQLSEHG) is disordered. The 171-residue stretch at 159 to 329 (ADVGLVGFPS…LLFEVANQLE (171 aa)) folds into the OBG-type G domain. GTP contacts are provided by residues 165-172 (GFPSVGKS), 190-194 (FTTLV), 212-215 (DLPG), 282-285 (NKMD), and 310-312 (SAV). Ser-172 and Thr-192 together coordinate Mg(2+). Positions 350-428 (TMEDEEIPFN…LLEFEFEFID (79 aa)) constitute an OCT domain.

The protein belongs to the TRAFAC class OBG-HflX-like GTPase superfamily. OBG GTPase family. Monomer. Requires Mg(2+) as cofactor.

It localises to the cytoplasm. In terms of biological role, an essential GTPase which binds GTP, GDP and possibly (p)ppGpp with moderate affinity, with high nucleotide exchange rates and a fairly low GTP hydrolysis rate. Plays a role in control of the cell cycle, stress response, ribosome biogenesis and in those bacteria that undergo differentiation, in morphogenesis control. The polypeptide is GTPase Obg (Bacillus velezensis (strain DSM 23117 / BGSC 10A6 / LMG 26770 / FZB42) (Bacillus amyloliquefaciens subsp. plantarum)).